The primary structure comprises 500 residues: MAPSSNHKVVIVGAGPVGSLAALYAAARGDEVEVYELRGDLRDPSTIPLNFTKSINLALSERGINAMKHTRRDNMIQKILGEAIPVYGRMIHGRNDEKLWEASQAYDVHGRHINAADRCHLNNALLDELEQTPNVKLFFNHKLTGADFRAKKAWFEQRTPADNTSRAPEVEITFDYLVGADGAHSISRYHMMKYARVDYQQQYIDALWCEFHIPPTEEGEFRISPNHLHIWPGKEFMFIALPSADKSFTCTLFASTSYYTLLESSPESLLESFDKNFPGVCPDLITPADLQTQFETNPHLPLISIKCSPYHFGSSAVIVGDAAHAVVPFYGQGLNAGLEDIRVLFECLDQHGVYDLNASPESRALSRQAALQAYTDQRTKDAHAINDLSKDNYIEMRWGVQLPLYKLRKSLEETLDRYMPSLGWQTQYVRVSFSTQPYSEVIKAVERQGTLLLYGSISAIISSAAIVGVLAWNYPMRVSLLSMLQSPIQQLWSVWRNYHC.

Residues valine 17 and 36–38 (ELR) each bind FAD. An N-linked (GlcNAc...) asparagine glycan is attached at asparagine 50. Alanine 58 serves as a coordination point for FAD. L-kynurenine-binding residues include arginine 89 and tyrosine 106. FAD contacts are provided by arginine 118 and leucine 143. N-linked (GlcNAc...) asparagine glycosylation occurs at asparagine 163. FAD-binding positions include aspartate 321 and 332-335 (QGLN). L-kynurenine-binding residues include asparagine 392 and tyrosine 428. Residues 451–471 (LLLYGSISAIISSAAIVGVLA) traverse the membrane as a helical segment.

The protein belongs to the aromatic-ring hydroxylase family. KMO subfamily. FAD serves as cofactor.

The protein resides in the mitochondrion outer membrane. It carries out the reaction L-kynurenine + NADPH + O2 + H(+) = 3-hydroxy-L-kynurenine + NADP(+) + H2O. The protein operates within secondary metabolite biosynthesis. It participates in cofactor biosynthesis; NAD(+) biosynthesis; quinolinate from L-kynurenine: step 1/3. In terms of biological role, indoleamine 2,3-dioxygenase; part of the gene cluster that mediates the biosynthesis of aspcandine, a pyrrolobenzazepine alkaloid. Initially, the indoleamine 2,3-dioxygenase acdA accepts L-tryptophan and performs the oxidative opening of the indole ring to yield N'-formyl-L-kynurenine, which undergoes the spontaneous deformylation reaction to provide L-kynurenine. The kynurenine 3-monooxygenase acdD then hydroxylates L-kynurenine to afford 3-hydroxy-L-kynurenine. 3-hydroxy-L-kynurenine is activated by the A domain of the NRPS-PKS acdB and subsequently loaded onto the enzyme. The KS domain conducts the decarboxylative condensation of the 3-hydroxy-L-kynurenyl and malonyl moieties, and subsequent nucleophilic attacks by the two amino groups would occur nonenzymatically at two distinct positions, achieving the chain release and the construction of the tricyclic system. Finally, the dehydration reaction completes the biosynthesis to yield aspcandine. This Aspergillus candidus protein is Kynurenine 3-monooxygenase acdD.